A 507-amino-acid chain; its full sequence is MIRDKNPQRVNRPSYGSISSLPSPAPQPEPSRNTYLSEKIPIPSTEQLLWVLLWATVLGLLCQRLAARLGVVTGKDLGEICHLYYPKVPRILLWLTIELAIVGSDMQEVIGTAISFNLLSAGRIPLWGGVLITIVDTFFFLFLDNYGLRKLEAFFGFLVTIMALTFGYEYVVARPSQGALLKGLFLPSCPGCGQPELLQAVGIVGAIIMPHNIYLHSALVKSREVDRTRRGDVREANMYFLTEATIALFVSFIINLFVMAVFGQAFYQQTNEEAFNICANSSLHNYAKIFPRDNNTVSVDIYQGGVILGCLFGPAALYIWAVGLLAAGQSSTMTGTYAGQFVMEGFLKLRWSRFARVLLTRSCAILPTVLVAVFRDLRDLSGLNDLLNVLQSLLLPFAVLPILTFTSMPAVMQEFANGWLSKVITSCIMALVCAINLYFVISYLPSLPHPAYFGLVALLAIGYLGLTAYLAWTCCIAHGAKFLTHSSHQRFLYGLPIEEQEGREGSG.

The tract at residues 1–36 is disordered; it reads MIRDKNPQRVNRPSYGSISSLPSPAPQPEPSRNTYL. At 1–39 the chain is on the cytoplasmic side; it reads MIRDKNPQRVNRPSYGSISSLPSPAPQPEPSRNTYLSEK. The span at 8–22 shows a compositional bias: polar residues; sequence QRVNRPSYGSISSLP. Residues 40–60 form a helical membrane-spanning segment; the sequence is IPIPSTEQLLWVLLWATVLGL. Over 61–123 the chain is Extracellular; sequence LCQRLAARLG…ISFNLLSAGR (63 aa). A helical transmembrane segment spans residues 124–144; sequence IPLWGGVLITIVDTFFFLFLD. Topologically, residues 145-152 are cytoplasmic; the sequence is NYGLRKLE. The chain crosses the membrane as a helical span at residues 153–173; the sequence is AFFGFLVTIMALTFGYEYVVA. The Extracellular segment spans residues 174-199; it reads RPSQGALLKGLFLPSCPGCGQPELLQ. Residues 200–220 traverse the membrane as a helical segment; sequence AVGIVGAIIMPHNIYLHSALV. Residues 221–245 lie on the Cytoplasmic side of the membrane; sequence KSREVDRTRRGDVREANMYFLTEAT. Residues 246 to 266 traverse the membrane as a helical segment; sequence IALFVSFIINLFVMAVFGQAF. Over 267–305 the chain is Extracellular; that stretch reads YQQTNEEAFNICANSSLHNYAKIFPRDNNTVSVDIYQGG. Asn-280 and Asn-294 each carry an N-linked (GlcNAc...) asparagine glycan. The helical transmembrane segment at 306–326 threads the bilayer; sequence VILGCLFGPAALYIWAVGLLA. At 327 to 353 the chain is on the cytoplasmic side; sequence AGQSSTMTGTYAGQFVMEGFLKLRWSR. A helical transmembrane segment spans residues 354 to 374; it reads FARVLLTRSCAILPTVLVAVF. The Extracellular segment spans residues 375-391; the sequence is RDLRDLSGLNDLLNVLQ. Residues 392-412 form a helical membrane-spanning segment; it reads SLLLPFAVLPILTFTSMPAVM. The Cytoplasmic portion of the chain corresponds to 413-422; that stretch reads QEFANGWLSK. Residues 423 to 443 form a helical membrane-spanning segment; sequence VITSCIMALVCAINLYFVISY. At 444-451 the chain is on the extracellular side; sequence LPSLPHPA. The chain crosses the membrane as a helical span at residues 452–472; sequence YFGLVALLAIGYLGLTAYLAW. Over 473 to 507 the chain is Cytoplasmic; the sequence is TCCIAHGAKFLTHSSHQRFLYGLPIEEQEGREGSG.

The protein belongs to the NRAMP family.

It localises to the late endosome membrane. Its subcellular location is the lysosome membrane. It carries out the reaction Zn(2+)(in) + H(+)(out) = Zn(2+)(out) + H(+)(in). The catalysed reaction is Fe(2+)(in) + H(+)(out) = Fe(2+)(out) + H(+)(in). The enzyme catalyses Mn(2+)(in) + H(+)(out) = Mn(2+)(out) + H(+)(in). Its function is as follows. Macrophage-specific antiporter that fluxes metal ions in either direction against a proton gradient. Localized to late endosomal lysosomal membranes, delivers bivalent cations from the cytosol into these acidic compartments where they may directly affect antimicrobial activity. Involved in iron metabolism and host natural resistance to infection with intracellular parasites. Pathogen resistance involves sequestration of Fe(2+) and Mn(2+), cofactors of both prokaryotic and eukaryotic catalases and superoxide dismutases, not only to protect the macrophage against its own generation of reactive oxygen species, but to deny the cations to the pathogen for synthesis of its protective enzymes. This chain is Natural resistance-associated macrophage protein 1 (Slc11a1), found in Rattus norvegicus (Rat).